The primary structure comprises 95 residues: UPF0235 protein Swoo_1329 (95 aa).

The protein belongs to the UPF0235 family.

The protein is UPF0235 protein Swoo_1329 of Shewanella woodyi (strain ATCC 51908 / MS32).